The following is a 25-amino-acid chain: Kunitz-type serine protease inhibitor RsTIS5 (25 aa).

The region spanning 1–25 (EAEPKPFNPVCYEPKEVGPCKAYVP) is the BPTI/Kunitz inhibitor domain.

In terms of biological role, serine protease inhibitor. Inhibits trypsin, elastase and plasmin. Does not inhibit kallikrein. This chain is Kunitz-type serine protease inhibitor RsTIS5, found in Rhipicephalus sanguineus (Brown dog tick).